The primary structure comprises 271 residues: uncharacterized protein (271 aa).

A run of 3 helical transmembrane segments spans residues 30–50 (IWFP…GMLL), 189–209 (ALAA…YFLI), and 218–238 (FLVT…IFAC).

The protein resides in the cell membrane. This is an uncharacterized protein from Aquifex aeolicus (strain VF5).